An 879-amino-acid polypeptide reads, in one-letter code: Beta-mannosidase (879 aa).

The N-terminal stretch at 1 to 17 is a signal peptide; the sequence is MLLRLLLLLAPCGAGFA. N35 and N77 each carry an N-linked (GlcNAc...) asparagine glycan. A disulfide bridge connects residues C167 and C176. Residue 190–192 participates in substrate binding; the sequence is WDW. 2 N-linked (GlcNAc...) asparagine glycosylation sites follow: N297 and N302. N456 contributes to the substrate binding site. The Proton donor role is filled by E457. 3 disulfide bridges follow: C540/C629, C732/C761, and C764/C769. Catalysis depends on E554, which acts as the Nucleophile. Residue N607 is glycosylated (N-linked (GlcNAc...) asparagine). The N-linked (GlcNAc...) asparagine glycan is linked to N803.

It belongs to the glycosyl hydrolase 2 family. Monomer. In terms of processing, the N-terminus is blocked. Post-translationally, N-glycosylated. As to expression, detected in kidney (at protein level). Highest expression is found in thyroid tissue. The amount of transcript is significantly higher in normal tissues than in tissues affected by the disease.

The protein resides in the lysosome. The catalysed reaction is Hydrolysis of terminal, non-reducing beta-D-mannose residues in beta-D-mannosides.. Its pathway is glycan metabolism; N-glycan degradation. Functionally, exoglycosidase that cleaves the single beta-linked mannose residue from the non-reducing end of all N-linked glycoprotein oligosaccharides. This Bos taurus (Bovine) protein is Beta-mannosidase (MANBA).